The primary structure comprises 37 residues: Large ribosomal subunit protein bL36 (37 aa).

This sequence belongs to the bacterial ribosomal protein bL36 family.

In Cyanothece sp. (strain PCC 7425 / ATCC 29141), this protein is Large ribosomal subunit protein bL36.